Consider the following 602-residue polypeptide: Chaperone protein DnaK (602 aa).

At threonine 199 the chain carries Phosphothreonine; by autocatalysis.

It belongs to the heat shock protein 70 family.

In terms of biological role, acts as a chaperone. This Carsonella ruddii (strain PV) protein is Chaperone protein DnaK.